The following is a 95-amino-acid chain: FXYD domain-containing ion transport regulator 6 (95 aa).

The first 18 residues, 1-18, serve as a signal peptide directing secretion; sequence MELVLVFLCSLLAPTVLA. The Extracellular portion of the chain corresponds to 19–35; it reads SAAEKEKEMDPFHYDYQ. Residues 36 to 58 form a helical membrane-spanning segment; the sequence is TLRIGGLVFAVVLFSVGILLILS. The Cytoplasmic segment spans residues 59-95; the sequence is RRCKCSFNQKPRAPGDEEAQVENLITANATEPQKAEN.

It belongs to the FXYD family. As to quaternary structure, regulatory subunit of the sodium/potassium-transporting ATPase which is composed of a catalytic alpha subunit, a non-catalytic beta subunit and an additional regulatory subunit. The regulatory subunit, a member of the FXYD protein family, modulates the enzymatic activity in a tissue- and isoform-specific way by changing affinities of the Na+/K+-ATPase toward Na(+), K(+) or ATP.

It localises to the cell membrane. Its function is as follows. Associates with and regulates the activity of the sodium/potassium-transporting ATPase (NKA) which catalyzes the hydrolysis of ATP coupled with the exchange of Na(+) and K(+) ions across the plasma membrane. Reduces the apparent affinity for intracellular Na(+) with no change in the apparent affinity for extracellular K(+). In addition to modulating NKA kinetics, may also function as a regulator of NKA localization to the plasma membrane. The sequence is that of FXYD domain-containing ion transport regulator 6 (FXYD6) from Pongo abelii (Sumatran orangutan).